A 338-amino-acid polypeptide reads, in one-letter code: MQIWPHKHIHTLANFSIKDYESVFELANRFDALKNAGTKKIPALQGTLVTSLFFEASTRTKNSFELAAKRLSADVQTFAPSSSSLTKGETIIDTAITYSAMGADTLVIRHSSSYITFEIAKKLDAINSKTSVLNAGDGLHSHPSQGLLDIYTLIKFFSPQTLNPEVLNSKKILIIGDVNHSRVARSNLWALSAFGADIILCGPKALIPDEFINFLKTPAPNQTEDPVKSRGSITISRSLEESIKTADAIIVLRLQKERMMENLLSSIDSYSLDYGLTPEKLSLNNKEIPILHPGPINRDIEISSKVVDRYPNCLINNQVANGIPIRMALLYLLQKHNK.

Carbamoyl phosphate is bound by residues R59 and T60. K87 contacts L-aspartate. Carbamoyl phosphate is bound by residues R109, H142, and Q145. 2 residues coordinate L-aspartate: R182 and R253. G294 and P295 together coordinate carbamoyl phosphate.

It belongs to the aspartate/ornithine carbamoyltransferase superfamily. ATCase family. In terms of assembly, heterododecamer (2C3:3R2) of six catalytic PyrB chains organized as two trimers (C3), and six regulatory PyrI chains organized as three dimers (R2).

The enzyme catalyses carbamoyl phosphate + L-aspartate = N-carbamoyl-L-aspartate + phosphate + H(+). Its pathway is pyrimidine metabolism; UMP biosynthesis via de novo pathway; (S)-dihydroorotate from bicarbonate: step 2/3. Catalyzes the condensation of carbamoyl phosphate and aspartate to form carbamoyl aspartate and inorganic phosphate, the committed step in the de novo pyrimidine nucleotide biosynthesis pathway. The chain is Aspartate carbamoyltransferase catalytic subunit from Prochlorococcus marinus (strain AS9601).